We begin with the raw amino-acid sequence, 947 residues long: Protein translocase subunit SecA (947 aa).

Residues Q87, 105 to 109 (GEGKT), and D525 each bind ATP. The segment at 905–928 (PADNADKTARNPNDPSTWGKVGRN) is disordered. Zn(2+) contacts are provided by C931, C933, C942, and H943.

The protein belongs to the SecA family. In terms of assembly, monomer and homodimer. Part of the essential Sec protein translocation apparatus which comprises SecA, SecYEG and auxiliary proteins SecDF-YajC and YidC. It depends on Zn(2+) as a cofactor.

The protein localises to the cell inner membrane. Its subcellular location is the cytoplasm. It catalyses the reaction ATP + H2O + cellular proteinSide 1 = ADP + phosphate + cellular proteinSide 2.. Part of the Sec protein translocase complex. Interacts with the SecYEG preprotein conducting channel. Has a central role in coupling the hydrolysis of ATP to the transfer of proteins into and across the cell membrane, serving both as a receptor for the preprotein-SecB complex and as an ATP-driven molecular motor driving the stepwise translocation of polypeptide chains across the membrane. In Rhodopseudomonas palustris (strain BisB18), this protein is Protein translocase subunit SecA.